Reading from the N-terminus, the 362-residue chain is MLYDLLGGMAGDIQALNVFRYITFRTGGATVTALLISFLFGPRIIALLKAKQRRGQPIREDGPQTHIIQKQGTPTMGGFLILVGLVPSVLLWADWSNRYVWIVLFVTLGFGAVGFADDYLKVSKISPKGVPGRVKLFFEFVIALIAMWALVLVSSEPLQTALTVPFFKTLLIELGGFFFLFGALVIVGSSNAVNLTDGLDGLAIVPVMIAAASLGLIVYLVGNAVFADYLQIHFVPGTGELAVFCGALIGAGLGFLWYNAPPAMVFMGDTGSLALGGALGAIAVAAKHELVLAIIGGLFVLEAVSVIVQVASFKLTGKRVFRMAPLHHHFEQKGWAEPTVVVRFWIISVVLAMAGLATLKLR.

10 helical membrane passes run 28–48 (GATVTALLISFLFGPRIIALL), 73–93 (TPTMGGFLILVGLVPSVLLWA), 100–120 (VWIVLFVTLGFGAVGFADDYL), 134–154 (VKLFFEFVIALIAMWALVLVS), 169–189 (TLLIELGGFFFLFGALVIVGS), 201–221 (GLAIVPVMIAAASLGLIVYLV), 241–261 (LAVFCGALIGAGLGFLWYNAP), 264–284 (MVFMGDTGSLALGGALGAIAV), 290–310 (LVLAIIGGLFVLEAVSVIVQV), and 339–359 (TVVVRFWIISVVLAMAGLATL).

Belongs to the glycosyltransferase 4 family. MraY subfamily. Mg(2+) is required as a cofactor.

It localises to the cell inner membrane. It catalyses the reaction UDP-N-acetyl-alpha-D-muramoyl-L-alanyl-gamma-D-glutamyl-meso-2,6-diaminopimeloyl-D-alanyl-D-alanine + di-trans,octa-cis-undecaprenyl phosphate = di-trans,octa-cis-undecaprenyl diphospho-N-acetyl-alpha-D-muramoyl-L-alanyl-D-glutamyl-meso-2,6-diaminopimeloyl-D-alanyl-D-alanine + UMP. It functions in the pathway cell wall biogenesis; peptidoglycan biosynthesis. In terms of biological role, catalyzes the initial step of the lipid cycle reactions in the biosynthesis of the cell wall peptidoglycan: transfers peptidoglycan precursor phospho-MurNAc-pentapeptide from UDP-MurNAc-pentapeptide onto the lipid carrier undecaprenyl phosphate, yielding undecaprenyl-pyrophosphoryl-MurNAc-pentapeptide, known as lipid I. The protein is Phospho-N-acetylmuramoyl-pentapeptide-transferase of Parvibaculum lavamentivorans (strain DS-1 / DSM 13023 / NCIMB 13966).